The sequence spans 80 residues: RNA-binding protein KhpA (80 aa).

The KH domain maps to 33–80 (GRTVEVHVHPDDLGKVIGRGGRTATALRTLVAGIGGRGIRVDVVDTDQ).

Belongs to the KhpA RNA-binding protein family.

The protein resides in the cytoplasm. Functionally, a probable RNA-binding protein. This Mycobacterium bovis (strain ATCC BAA-935 / AF2122/97) protein is RNA-binding protein KhpA.